A 469-amino-acid chain; its full sequence is MSQDTLFDKVWDLHKVANLPGGSDQILIGLHLIHEVTSPQAFGALKDKNLKVKFPQRTVATVDHIVPTDNQSRPFKDNLAEQMIDTLEKNCIEHKIKFFNIGSGNQGIVHVVAPELGLTQPGMTIACGDSHTSTHGAFGSIAFGIGTSQVRDVLASQTIAMNKLKVRQIWCENKLSNGIYAKDLVLHIINQLGVKAGVGYAYEFAGPAISELSMEERMTICNMSIEGGARCGYINPDEKTFSYMKDKLCSPQNENWEKAVKWWKSLESSDNCVYDDVFKLDASKVEPTITWGITPGQSIGVNQKIPSLNQIHPNDQFIAEEAYEYMSFKPGQSIKNTPIDVCFIGSCTNGRISDLRVAAQVLEHNKVAKNIKAFVVPGSEKVAKEAKEEGLDKIFIKAGFQWREPGCSMCLAMNSDKLIGNQVSASSSNRNFKGRQGSPNGRTLLMSPAMVAAASITGKVSDVRDFINK.

Residues Cys347, Cys407, and Cys410 each contribute to the [4Fe-4S] cluster site.

This sequence belongs to the aconitase/IPM isomerase family. LeuC type 1 subfamily. Heterodimer of LeuC and LeuD. It depends on [4Fe-4S] cluster as a cofactor.

It catalyses the reaction (2R,3S)-3-isopropylmalate = (2S)-2-isopropylmalate. It participates in amino-acid biosynthesis; L-leucine biosynthesis; L-leucine from 3-methyl-2-oxobutanoate: step 2/4. Catalyzes the isomerization between 2-isopropylmalate and 3-isopropylmalate, via the formation of 2-isopropylmaleate. The chain is 3-isopropylmalate dehydratase large subunit from Prochlorococcus marinus subsp. pastoris (strain CCMP1986 / NIES-2087 / MED4).